Here is a 498-residue protein sequence, read N- to C-terminus: Swainsonine transporter swnT (498 aa).

A compositionally biased stretch (basic and acidic residues) spans 1–10 (MSLRNDEQTE). The disordered stretch occupies residues 1 to 21 (MSLRNDEQTEKGAVVGKVDSQ). The next 5 helical transmembrane spans lie at 42–64 (LSAIGIGYGVTNTAVGLLLVLGT), 79–99 (LAMAAVGLATATTLSELISAI), 126–146 (AMISWIAAIAIGASGNLAVPV), 167–187 (FVVFQLINIVTCFGACFEYFL), and 193–213 (ALLLVNVLSVSAIIITLFATA). Residues Asn-227 and Asn-242 are each glycosylated (N-linked (GlcNAc...) asparagine). Transmembrane regions (helical) follow at residues 272–292 (LIWTIVIAFSSGLLMILAVLV), 316–336 (AAAIGLWVPVLFLVFASVWSI), 370–390 (PIWSLIGSAIGTALFGCLYLA), 398–418 (LIATGILLQYASYSIPTILVL), 436–456 (GFMANIVMLAWTLVALIFYCF), and 469–489 (YVSAVLILIAILITSLWFLYA).

It belongs to the amino acid-polyamine-organocation (APC) superfamily. Amino acid/choline transporter (ACT) (TC 2.A.3.4) family.

It localises to the membrane. In terms of biological role, transmembrane transporter; part of the gene cluster that mediates the biosynthesis of swainsonine, a cytotoxic fungal alkaloid and a potential cancer therapy drug. Does not mediate the secretion of SW and the exact role of swnT in SW biosynthesis remains to be determined. In Arthroderma benhamiae (strain ATCC MYA-4681 / CBS 112371) (Trichophyton mentagrophytes), this protein is Swainsonine transporter swnT.